The primary structure comprises 899 residues: Translation initiation factor IF-2 (899 aa).

Disordered regions lie at residues 115–137 (EAKA…LQTE), 170–189 (RGGG…EQKK), and 262–309 (DREI…HGFE). A tr-type G domain is found at 399–568 (TRPPVVTIMG…LIQSELMELK (170 aa)). Residues 408 to 415 (GHVDHGKT) form a G1 region. A GTP-binding site is contributed by 408–415 (GHVDHGKT). Residues 433-437 (GITQH) are G2. Residues 454–457 (DTPG) form a G3 region. Residues 454–458 (DTPGH) and 508–511 (NKMD) contribute to the GTP site. The segment at 508 to 511 (NKMD) is G4. Residues 544 to 546 (SAH) form a G5 region.

Belongs to the TRAFAC class translation factor GTPase superfamily. Classic translation factor GTPase family. IF-2 subfamily.

Its subcellular location is the cytoplasm. One of the essential components for the initiation of protein synthesis. Protects formylmethionyl-tRNA from spontaneous hydrolysis and promotes its binding to the 30S ribosomal subunits. Also involved in the hydrolysis of GTP during the formation of the 70S ribosomal complex. The polypeptide is Translation initiation factor IF-2 (Acinetobacter baumannii (strain SDF)).